Consider the following 215-residue polypeptide: Octanoyltransferase (215 aa).

A BPL/LPL catalytic domain is found at 31–206; sequence TTAPDEIWLV…QLVKHLDYAE (176 aa). Residues 70-77, 137-139, and 150-152 contribute to the substrate site; these read RGGQVTYH, SLG, and GLA. Cysteine 168 functions as the Acyl-thioester intermediate in the catalytic mechanism.

The protein belongs to the LipB family.

It localises to the cytoplasm. It carries out the reaction octanoyl-[ACP] + L-lysyl-[protein] = N(6)-octanoyl-L-lysyl-[protein] + holo-[ACP] + H(+). Its pathway is protein modification; protein lipoylation via endogenous pathway; protein N(6)-(lipoyl)lysine from octanoyl-[acyl-carrier-protein]: step 1/2. Functionally, catalyzes the transfer of endogenously produced octanoic acid from octanoyl-acyl-carrier-protein onto the lipoyl domains of lipoate-dependent enzymes. Lipoyl-ACP can also act as a substrate although octanoyl-ACP is likely to be the physiological substrate. This chain is Octanoyltransferase, found in Pseudomonas fluorescens (strain Pf0-1).